Consider the following 156-residue polypeptide: MPRRGPVTPREIPPDPVYNSVLVQKLINKVMLDGKKSIAEKIVYGAMEIIREKTKQDPLVVLEKAVQNVTPLLEVRPRRVGGATYQVPIEVPPRRGLSLALRWIVRAARERKGMPMKERLALEILDALNNTGGAIKKRDEMHRMAEANKAFAHYRW.

This sequence belongs to the universal ribosomal protein uS7 family. In terms of assembly, part of the 30S ribosomal subunit. Contacts proteins S9 and S11.

Functionally, one of the primary rRNA binding proteins, it binds directly to 16S rRNA where it nucleates assembly of the head domain of the 30S subunit. Is located at the subunit interface close to the decoding center, probably blocks exit of the E-site tRNA. The chain is Small ribosomal subunit protein uS7 from Dictyoglomus thermophilum (strain ATCC 35947 / DSM 3960 / H-6-12).